Consider the following 620-residue polypeptide: 1-deoxy-D-xylulose-5-phosphate synthase (620 aa).

Thiamine diphosphate is bound by residues histidine 80 and 121 to 123 (GHS). Aspartate 152 contacts Mg(2+). Residues 153–154 (GA), asparagine 181, tyrosine 288, and glutamate 370 contribute to the thiamine diphosphate site. Residue asparagine 181 participates in Mg(2+) binding.

Belongs to the transketolase family. DXPS subfamily. In terms of assembly, homodimer. It depends on Mg(2+) as a cofactor. Thiamine diphosphate serves as cofactor.

It carries out the reaction D-glyceraldehyde 3-phosphate + pyruvate + H(+) = 1-deoxy-D-xylulose 5-phosphate + CO2. The protein operates within metabolic intermediate biosynthesis; 1-deoxy-D-xylulose 5-phosphate biosynthesis; 1-deoxy-D-xylulose 5-phosphate from D-glyceraldehyde 3-phosphate and pyruvate: step 1/1. Catalyzes the acyloin condensation reaction between C atoms 2 and 3 of pyruvate and glyceraldehyde 3-phosphate to yield 1-deoxy-D-xylulose-5-phosphate (DXP). The polypeptide is 1-deoxy-D-xylulose-5-phosphate synthase (Salmonella typhi).